Reading from the N-terminus, the 296-residue chain is Putative mannose 6-phosphate receptor-like protein C530.09c (296 aa).

The signal sequence occupies residues 1–25 (MRLLTCLINVLAGLTLFSQFQRAFG). At 26–206 (LTITRRGFKV…TVKKDSTLNP (181 aa)) the chain is on the lumenal side. Residues 42–197 (PFCALHHPNT…EWKTIHACPT (156 aa)) enclose the MRH domain. Cys44 and Cys87 are oxidised to a cystine. Residues Asn64, Asn81, Asn93, Asn96, and Asn143 are each glycosylated (N-linked (GlcNAc...) asparagine). Cystine bridges form between Cys147–Cys183 and Cys163–Cys195. A helical transmembrane segment spans residues 207 to 227 (VSVFLLFCAIAFLAYFVGGFV). The Cytoplasmic portion of the chain corresponds to 228–249 (YQRVVLNARGLRQIPNYEMWRS). A helical transmembrane segment spans residues 250 to 270 (LFGFISDIVIILYSSILSILP). At 271 to 296 (SSITRMRGNRRNIDYVEDALIDDIDT) the chain is on the lumenal side.

Belongs to the MRL1/IGF2R family.

The protein localises to the golgi apparatus. The protein resides in the trans-Golgi network membrane. It localises to the endosome membrane. This Schizosaccharomyces pombe (strain 972 / ATCC 24843) (Fission yeast) protein is Putative mannose 6-phosphate receptor-like protein C530.09c.